The following is a 776-amino-acid chain: Meiotic expression up-regulated protein 1/2 (776 aa).

5 coiled-coil regions span residues 87–122 (YVLKVAEEKIEKLLKENGTLKNEEKCLRMQIVAQEE), 173–227 (FSEL…DLKE), 265–307 (YKVE…NDEE), 362–430 (KMSQ…RNNS), and 496–595 (INNQ…NTEL).

This is Meiotic expression up-regulated protein 1/2 (meu1) from Schizosaccharomyces pombe (strain 972 / ATCC 24843) (Fission yeast).